A 152-amino-acid polypeptide reads, in one-letter code: Large ribosomal subunit protein bL9 (152 aa).

The protein belongs to the bacterial ribosomal protein bL9 family.

Functionally, binds to the 23S rRNA. The sequence is that of Large ribosomal subunit protein bL9 from Corynebacterium urealyticum (strain ATCC 43042 / DSM 7109).